The following is a 377-amino-acid chain: Protein-glutamate methylesterase/protein-glutamine glutaminase 1 (377 aa).

The 118-residue stretch at 4 to 121 (KVLVVDDSSF…ARNRDEAVTL (118 aa)) folds into the Response regulatory domain. A 4-aspartylphosphate modification is found at aspartate 55. Residues 138–170 (RPAAPRPAPTTSIAASSSLSQERAAATSPLGNR) are disordered. A compositionally biased stretch (low complexity) spans 146 to 157 (PTTSIAASSSLS). The CheB-type methylesterase domain occupies 184–377 (SGKKYQLTAI…ERMLVEVGLA (194 aa)). Catalysis depends on residues serine 196, histidine 223, and aspartate 319.

It belongs to the CheB family. Post-translationally, phosphorylated by CheA. Phosphorylation of the N-terminal regulatory domain activates the methylesterase activity.

The protein resides in the cytoplasm. The enzyme catalyses [protein]-L-glutamate 5-O-methyl ester + H2O = L-glutamyl-[protein] + methanol + H(+). It catalyses the reaction L-glutaminyl-[protein] + H2O = L-glutamyl-[protein] + NH4(+). In terms of biological role, involved in chemotaxis. Part of a chemotaxis signal transduction system that modulates chemotaxis in response to various stimuli. Catalyzes the demethylation of specific methylglutamate residues introduced into the chemoreceptors (methyl-accepting chemotaxis proteins or MCP) by CheR. Also mediates the irreversible deamidation of specific glutamine residues to glutamic acid. This chain is Protein-glutamate methylesterase/protein-glutamine glutaminase 1, found in Vibrio cholerae serotype O1 (strain ATCC 39315 / El Tor Inaba N16961).